The chain runs to 548 residues: Membrane protein insertase YidC (548 aa).

A helical transmembrane segment spans residues 6-26 (NLLVIALLFVSFMIWQAWEQD). Residues 28-54 (NPQPQTQQTTQTTTTAAGSAADQGVPA) are disordered. Residues 29 to 42 (PQPQTQQTTQTTTT) show a composition bias toward low complexity. A run of 4 helical transmembrane segments spans residues 350–370 (FVGN…GIMY), 424–444 (FPLI…MGSI), 458–478 (LSAQ…MFFI), and 499–519 (PVIF…YYIV).

The protein belongs to the OXA1/ALB3/YidC family. Type 1 subfamily. In terms of assembly, interacts with the Sec translocase complex via SecD. Specifically interacts with transmembrane segments of nascent integral membrane proteins during membrane integration.

It is found in the cell inner membrane. Required for the insertion and/or proper folding and/or complex formation of integral membrane proteins into the membrane. Involved in integration of membrane proteins that insert both dependently and independently of the Sec translocase complex, as well as at least some lipoproteins. Aids folding of multispanning membrane proteins. The protein is Membrane protein insertase YidC of Salmonella arizonae (strain ATCC BAA-731 / CDC346-86 / RSK2980).